The chain runs to 249 residues: 5'-nucleotidase SurE (249 aa).

A divalent metal cation is bound by residues Asp8, Asp9, Ser39, and Asn91.

It belongs to the SurE nucleotidase family. Requires a divalent metal cation as cofactor.

It localises to the cytoplasm. It catalyses the reaction a ribonucleoside 5'-phosphate + H2O = a ribonucleoside + phosphate. Nucleotidase that shows phosphatase activity on nucleoside 5'-monophosphates. This Pseudomonas putida (strain ATCC 700007 / DSM 6899 / JCM 31910 / BCRC 17059 / LMG 24140 / F1) protein is 5'-nucleotidase SurE.